We begin with the raw amino-acid sequence, 168 residues long: Shikimate kinase (168 aa).

C10–T15 contacts ATP. S14 contacts Mg(2+). Positions 32, 56, and 78 each coordinate substrate. R116 serves as a coordination point for ATP. R133 lines the substrate pocket.

It belongs to the shikimate kinase family. Monomer. Mg(2+) is required as a cofactor.

It is found in the cytoplasm. The enzyme catalyses shikimate + ATP = 3-phosphoshikimate + ADP + H(+). The protein operates within metabolic intermediate biosynthesis; chorismate biosynthesis; chorismate from D-erythrose 4-phosphate and phosphoenolpyruvate: step 5/7. Catalyzes the specific phosphorylation of the 3-hydroxyl group of shikimic acid using ATP as a cosubstrate. This chain is Shikimate kinase, found in Aquifex aeolicus (strain VF5).